Reading from the N-terminus, the 531-residue chain is Coiled-coil domain-containing protein 9 (531 aa).

Residues 40–531 are disordered; sequence EDRKKAELEG…PGEAWPFESV (492 aa). The span at 59-72 shows a compositional bias: basic and acidic residues; it reads RSVEKENVAVESEK. Position 80 is a phosphoserine (S80). T95 carries the phosphothreonine modification. An Omega-N-methylarginine modification is found at R107. A Phosphoserine modification is found at S111. 3 positions are modified to omega-N-methylarginine: R121, R128, and R130. R131, R133, and R135 each carry asymmetric dimethylarginine. Residue S137 is modified to Phosphoserine. Basic and acidic residues-rich tracts occupy residues 148 to 185, 194 to 217, and 227 to 241; these read ISDR…REGV, FLDD…EESR, and DFER…ERQG. Residues 149 to 185 are a coiled coil; that stretch reads SDRKSKEWEERRRQNIEKMNEEMEKIAEYERNQREGV. S202 is subject to Phosphoserine. Phosphoserine occurs at positions 248 and 255. 4 stretches are compositionally biased toward basic and acidic residues: residues 258–279, 289–302, 311–320, and 361–372; these read GRER…QERL, WRRE…DGMF, EPSHRYDDQA, and YSDHDDRWETKE. Residues S376, S386, and S390 each carry the phosphoserine modification. Over residues 386 to 395 the composition is skewed to low complexity; sequence SPETSPKETP. Residues 396 to 406 show a composition bias toward pro residues; that stretch reads MQPPEIPAPAH. Acidic residues predominate over residues 411-446; sequence DEGEENEGEEDEEWEDISEDEEEEEIEVEEGDEEEP. S521 carries the phosphoserine modification.

Probable component of the exon junction complex (EJC); the association is RNA-dependent.

Its function is as follows. Probable component of the exon junction complex (EJC), a multiprotein complex that associates immediately upstream of the exon-exon junction on mRNAs and serves as a positional landmark for the intron exon structure of genes and directs post-transcriptional processes in the cytoplasm such as mRNA export, nonsense-mediated mRNA decay (NMD) or translation. This chain is Coiled-coil domain-containing protein 9, found in Homo sapiens (Human).